The chain runs to 545 residues: Glucose-6-phosphate isomerase (545 aa).

Glu351 serves as the catalytic Proton donor. Residues His382 and Lys510 contribute to the active site.

Belongs to the GPI family.

The protein resides in the cytoplasm. It carries out the reaction alpha-D-glucose 6-phosphate = beta-D-fructose 6-phosphate. Its pathway is carbohydrate biosynthesis; gluconeogenesis. It functions in the pathway carbohydrate degradation; glycolysis; D-glyceraldehyde 3-phosphate and glycerone phosphate from D-glucose: step 2/4. Its function is as follows. Catalyzes the reversible isomerization of glucose-6-phosphate to fructose-6-phosphate. This Shewanella pealeana (strain ATCC 700345 / ANG-SQ1) protein is Glucose-6-phosphate isomerase.